Consider the following 580-residue polypeptide: MNHLIAFWPILKRLLIYVKPHKKKLILAFIFLLSGSTSEVLGPILISYFINNILSKHQLHLLIILTIITLFIILQILSVFLNYFQSILFNKIAVESINKLRQDVMYAALQQPISEFDSQPIGQMISKVTNDTEAVKELYDTVGPTLFRSIILIFIILFAMFTLEWHMALVALFILPLVITIMLVYQYYSTPLLRKVRYYLAEINNKFNETINGMNVIQQFCQQRRFQEKIKKSSDLHYMSRMKILRLDGFLLRPLLSLLSSMILCNFMFLFSFFPVGAFEVGVLYAFITYLGRLNEPLIAITIQQSVLQQSIVAGERIFSLIDSPKQKYGKNKDLLKSGKINIQNVSFYHKNCNKNILENINIKISSKSFVAFVGHTGSGKSTLANLIMGYYPLKNGKIYLDDKSIDSISHSVLRRNVLMVQQDPIVLSDTFFYNITLGRKIPEEKVWNILDTVHLSDLVKSMPKGIYSLLGEEGNNLSVGQKQLLAIARVLVAYPKVLILDEATANIDSGTEQLIQKTLLSIRKNCTLIIIAHRLSTIIEADSIIVLKKGKIVEFGTHEQLLTKKSCYYKMYKFQSCKF.

The region spanning 25-310 (LILAFIFLLS…ITIQQSVLQQ (286 aa)) is the ABC transmembrane type-1 domain. Transmembrane regions (helical) follow at residues 26 to 46 (ILAF…PILI), 61 to 81 (LLII…SVFL), 150 to 170 (IILI…MALV), 173 to 193 (FILP…TPLL), 247 to 267 (LDGF…LCNF), and 268 to 288 (MFLF…YAFI). One can recognise an ABC transporter domain in the interval 341–575 (INIQNVSFYH…KSCYYKMYKF (235 aa)). 375-382 (GHTGSGKS) contributes to the ATP binding site.

This sequence belongs to the ABC transporter superfamily. Drug exporter-2 (TC 3.A.1.117) family.

Its subcellular location is the cell membrane. The enzyme catalyses ATP + H2O + xenobioticSide 1 = ADP + phosphate + xenobioticSide 2.. The protein is Multidrug resistance-like ATP-binding protein MdlB (mdlB) of Buchnera aphidicola subsp. Acyrthosiphon pisum (strain APS) (Acyrthosiphon pisum symbiotic bacterium).